Here is a 376-residue protein sequence, read N- to C-terminus: Methylthioribose-1-phosphate isomerase (376 aa).

Residue D256 is the Proton donor of the active site.

The protein belongs to the eIF-2B alpha/beta/delta subunits family. MtnA subfamily.

It is found in the cytoplasm. Its subcellular location is the nucleus. The enzyme catalyses 5-(methylsulfanyl)-alpha-D-ribose 1-phosphate = 5-(methylsulfanyl)-D-ribulose 1-phosphate. It functions in the pathway amino-acid biosynthesis; L-methionine biosynthesis via salvage pathway; L-methionine from S-methyl-5-thio-alpha-D-ribose 1-phosphate: step 1/6. Its function is as follows. Catalyzes the interconversion of methylthioribose-1-phosphate (MTR-1-P) into methylthioribulose-1-phosphate (MTRu-1-P). The polypeptide is Methylthioribose-1-phosphate isomerase (Vitis vinifera (Grape)).